Here is a 496-residue protein sequence, read N- to C-terminus: Lysine--tRNA ligase (496 aa).

Positions 408 and 415 each coordinate Mg(2+).

It belongs to the class-II aminoacyl-tRNA synthetase family. Homodimer. It depends on Mg(2+) as a cofactor.

It localises to the cytoplasm. It carries out the reaction tRNA(Lys) + L-lysine + ATP = L-lysyl-tRNA(Lys) + AMP + diphosphate. The sequence is that of Lysine--tRNA ligase from Legionella pneumophila (strain Lens).